The chain runs to 323 residues: Elongation factor P--(R)-beta-lysine ligase (323 aa).

S76 to E78 lines the substrate pocket. ATP-binding positions include R100 to E102 and N109. Y118 lines the substrate pocket. E242–L243 provides a ligand contact to ATP. Residue E249 coordinates substrate. G298 contributes to the ATP binding site.

This sequence belongs to the class-II aminoacyl-tRNA synthetase family. EpmA subfamily. In terms of assembly, homodimer.

It carries out the reaction D-beta-lysine + L-lysyl-[protein] + ATP = N(6)-((3R)-3,6-diaminohexanoyl)-L-lysyl-[protein] + AMP + diphosphate + H(+). In terms of biological role, with EpmB is involved in the beta-lysylation step of the post-translational modification of translation elongation factor P (EF-P). Catalyzes the ATP-dependent activation of (R)-beta-lysine produced by EpmB, forming a lysyl-adenylate, from which the beta-lysyl moiety is then transferred to the epsilon-amino group of a conserved specific lysine residue in EF-P. The sequence is that of Elongation factor P--(R)-beta-lysine ligase from Mannheimia succiniciproducens (strain KCTC 0769BP / MBEL55E).